The sequence spans 1293 residues: Phosphoribosylformylglycinamidine synthase (1293 aa).

Residues 308 to 319 (GAATGAGGEIRD) and Ala-675 contribute to the ATP site. Asp-676, Glu-715, Asn-719, and Asp-883 together coordinate Mg(2+). Position 885 (Ser-885) interacts with ATP. The region spanning 1040-1293 (MAILREQGVN…MFRNARKFIG (254 aa)) is the Glutamine amidotransferase type-1 domain. Catalysis depends on Cys-1133, which acts as the Nucleophile. Active-site residues include His-1258 and Glu-1260.

The protein in the N-terminal section; belongs to the FGAMS family. In terms of assembly, monomer.

It localises to the cytoplasm. The catalysed reaction is N(2)-formyl-N(1)-(5-phospho-beta-D-ribosyl)glycinamide + L-glutamine + ATP + H2O = 2-formamido-N(1)-(5-O-phospho-beta-D-ribosyl)acetamidine + L-glutamate + ADP + phosphate + H(+). It participates in purine metabolism; IMP biosynthesis via de novo pathway; 5-amino-1-(5-phospho-D-ribosyl)imidazole from N(2)-formyl-N(1)-(5-phospho-D-ribosyl)glycinamide: step 1/2. In terms of biological role, phosphoribosylformylglycinamidine synthase involved in the purines biosynthetic pathway. Catalyzes the ATP-dependent conversion of formylglycinamide ribonucleotide (FGAR) and glutamine to yield formylglycinamidine ribonucleotide (FGAM) and glutamate. The polypeptide is Phosphoribosylformylglycinamidine synthase (Methylobacillus flagellatus (strain ATCC 51484 / DSM 6875 / VKM B-1610 / KT)).